Consider the following 102-residue polypeptide: Small ribosomal subunit protein eS24 (102 aa).

It belongs to the eukaryotic ribosomal protein eS24 family.

The polypeptide is Small ribosomal subunit protein eS24 (Methanococcus maripaludis (strain C5 / ATCC BAA-1333)).